The following is a 166-amino-acid chain: Large ribosomal subunit protein uL10 (166 aa).

The protein belongs to the universal ribosomal protein uL10 family. Part of the ribosomal stalk of the 50S ribosomal subunit. The N-terminus interacts with L11 and the large rRNA to form the base of the stalk. The C-terminus forms an elongated spine to which L12 dimers bind in a sequential fashion forming a multimeric L10(L12)X complex.

Forms part of the ribosomal stalk, playing a central role in the interaction of the ribosome with GTP-bound translation factors. The polypeptide is Large ribosomal subunit protein uL10 (Enterococcus faecalis (strain ATCC 700802 / V583)).